The sequence spans 163 residues: Putative 4-hydroxy-4-methyl-2-oxoglutarate aldolase (163 aa).

Residues 76–79 and Arg-98 each bind substrate; that span reads GDMI. Asp-99 lines the a divalent metal cation pocket.

The protein belongs to the class II aldolase/RraA-like family. In terms of assembly, homotrimer. A divalent metal cation serves as cofactor.

It catalyses the reaction 4-hydroxy-4-methyl-2-oxoglutarate = 2 pyruvate. It carries out the reaction oxaloacetate + H(+) = pyruvate + CO2. Functionally, catalyzes the aldol cleavage of 4-hydroxy-4-methyl-2-oxoglutarate (HMG) into 2 molecules of pyruvate. Also contains a secondary oxaloacetate (OAA) decarboxylase activity due to the common pyruvate enolate transition state formed following C-C bond cleavage in the retro-aldol and decarboxylation reactions. This chain is Putative 4-hydroxy-4-methyl-2-oxoglutarate aldolase, found in Pseudomonas fluorescens (strain SBW25).